Reading from the N-terminus, the 279-residue chain is Biotin synthase (279 aa).

The region spanning 1–228 (MKDIFLCSIC…SARLMIAGGR (228 aa)) is the Radical SAM core domain. [4Fe-4S] cluster is bound by residues Cys-17, Cys-21, and Cys-24. Positions 61, 96, 154, and 221 each coordinate [2Fe-2S] cluster.

It belongs to the radical SAM superfamily. Biotin synthase family. In terms of assembly, homodimer. It depends on [4Fe-4S] cluster as a cofactor. The cofactor is [2Fe-2S] cluster.

It catalyses the reaction (4R,5S)-dethiobiotin + (sulfur carrier)-SH + 2 reduced [2Fe-2S]-[ferredoxin] + 2 S-adenosyl-L-methionine = (sulfur carrier)-H + biotin + 2 5'-deoxyadenosine + 2 L-methionine + 2 oxidized [2Fe-2S]-[ferredoxin]. It functions in the pathway cofactor biosynthesis; biotin biosynthesis; biotin from 7,8-diaminononanoate: step 2/2. Functionally, catalyzes the conversion of dethiobiotin (DTB) to biotin by the insertion of a sulfur atom into dethiobiotin via a radical-based mechanism. The chain is Biotin synthase from Wolinella succinogenes (strain ATCC 29543 / DSM 1740 / CCUG 13145 / JCM 31913 / LMG 7466 / NCTC 11488 / FDC 602W) (Vibrio succinogenes).